Consider the following 555-residue polypeptide: Putative protein NRT1/ PTR FAMILY 2.14 (555 aa).

12 consecutive transmembrane segments (helical) span residues 62 to 82 (VTLI…GAFI), 93 to 113 (IVFG…TSLV), 135 to 155 (YSQL…TGGI), 181 to 201 (FFSW…TLVL), 209 to 229 (WGIG…LLFV), 234 to 254 (YVFV…LVAA), 319 to 339 (IKSI…FLAM), 363 to 383 (LIPP…WLPF), 405 to 425 (LQKV…SGIV), 441 to 461 (VFWL…TIVG), 480 to 500 (SLLY…VSIV), and 523 to 543 (CFYY…FWCA).

It belongs to the major facilitator superfamily. Proton-dependent oligopeptide transporter (POT/PTR) (TC 2.A.17) family. Not detected.

Its subcellular location is the membrane. This Arabidopsis thaliana (Mouse-ear cress) protein is Putative protein NRT1/ PTR FAMILY 2.14 (NPF2.14).